A 436-amino-acid chain; its full sequence is Glutamate-1-semialdehyde 2,1-aminomutase (436 aa).

Position 269 is an N6-(pyridoxal phosphate)lysine (Lys-269).

It belongs to the class-III pyridoxal-phosphate-dependent aminotransferase family. HemL subfamily. Homodimer. The cofactor is pyridoxal 5'-phosphate.

The protein resides in the cytoplasm. The enzyme catalyses (S)-4-amino-5-oxopentanoate = 5-aminolevulinate. It participates in porphyrin-containing compound metabolism; protoporphyrin-IX biosynthesis; 5-aminolevulinate from L-glutamyl-tRNA(Glu): step 2/2. It functions in the pathway porphyrin-containing compound metabolism; chlorophyll biosynthesis. This Heliobacterium modesticaldum (strain ATCC 51547 / Ice1) protein is Glutamate-1-semialdehyde 2,1-aminomutase.